We begin with the raw amino-acid sequence, 227 residues long: Ribonuclease 3 (227 aa).

One can recognise an RNase III domain in the interval 4 to 133 (FEKLEKLLSY…LIAAIYLDSN (130 aa)). Glu-46 contacts Mg(2+). Residue Asp-50 is part of the active site. Mg(2+)-binding residues include Asn-119 and Glu-122. Residue Glu-122 is part of the active site. Residues 158 to 226 (DPKTALQEWA…ARSLLHRLKN (69 aa)) form the DRBM domain.

Belongs to the ribonuclease III family. As to quaternary structure, homodimer. It depends on Mg(2+) as a cofactor.

The protein resides in the cytoplasm. It catalyses the reaction Endonucleolytic cleavage to 5'-phosphomonoester.. Functionally, digests double-stranded RNA. Involved in the processing of primary rRNA transcript to yield the immediate precursors to the large and small rRNAs (23S and 16S). Processes some mRNAs, and tRNAs when they are encoded in the rRNA operon. Processes pre-crRNA and tracrRNA of type II CRISPR loci if present in the organism. This Rickettsia africae (strain ESF-5) protein is Ribonuclease 3.